Consider the following 517-residue polypeptide: GMP synthase [glutamine-hydrolyzing] (517 aa).

The region spanning 11–202 (KIIVLDYGSQ…AFDICKAEAN (192 aa)) is the Glutamine amidotransferase type-1 domain. Cys88 functions as the Nucleophile in the catalytic mechanism. Active-site residues include His176 and Glu178. A GMPS ATP-PPase domain is found at 203-392 (WSMDDFITKQ…LGMPHALVWR (190 aa)). An ATP-binding site is contributed by 230–236 (SGGVDSS).

As to quaternary structure, homodimer.

The enzyme catalyses XMP + L-glutamine + ATP + H2O = GMP + L-glutamate + AMP + diphosphate + 2 H(+). It functions in the pathway purine metabolism; GMP biosynthesis; GMP from XMP (L-Gln route): step 1/1. In terms of biological role, catalyzes the synthesis of GMP from XMP. This is GMP synthase [glutamine-hydrolyzing] from Lacticaseibacillus casei (strain BL23) (Lactobacillus casei).